We begin with the raw amino-acid sequence, 209 residues long: Large ribosomal subunit protein uL3 (209 aa).

An N5-methylglutamine modification is found at Gln-150.

The protein belongs to the universal ribosomal protein uL3 family. As to quaternary structure, part of the 50S ribosomal subunit. Forms a cluster with proteins L14 and L19. Post-translationally, methylated by PrmB.

Its function is as follows. One of the primary rRNA binding proteins, it binds directly near the 3'-end of the 23S rRNA, where it nucleates assembly of the 50S subunit. The chain is Large ribosomal subunit protein uL3 from Klebsiella pneumoniae (strain 342).